Consider the following 847-residue polypeptide: Bifunctional protein argC, mitochondrial (847 aa).

The acetylglutamate kinase stretch occupies residues 100-331; it reads QIVLVKIGGG…PPSTSITITS (232 aa). Residues 352-508 form the N-acetyltransferase domain; that stretch reads GEVMHSHESP…CLSQSSTYLS (157 aa). An N-acetyl-gamma-glutamyl-phosphate reductase region spans residues 531–846; that stretch reads FRVGLIGARG…LDELASIKNE (316 aa). The active site involves Cys665.

In the N-terminal section; belongs to the acetylglutamate kinase family. It in the C-terminal section; belongs to the NAGSA dehydrogenase family.

Its subcellular location is the mitochondrion. The catalysed reaction is N-acetyl-L-glutamate 5-semialdehyde + phosphate + NADP(+) = N-acetyl-L-glutamyl 5-phosphate + NADPH + H(+). It catalyses the reaction N-acetyl-L-glutamate + ATP = N-acetyl-L-glutamyl 5-phosphate + ADP. The protein operates within amino-acid biosynthesis; L-arginine biosynthesis; N(2)-acetyl-L-ornithine from L-glutamate: step 2/4. It functions in the pathway amino-acid biosynthesis; L-arginine biosynthesis; N(2)-acetyl-L-ornithine from L-glutamate: step 3/4. The sequence is that of Bifunctional protein argC, mitochondrial (argC) from Dictyostelium discoideum (Social amoeba).